The chain runs to 342 residues: Olfactory receptor 51F2 (342 aa).

The Extracellular portion of the chain corresponds to 1-39; the sequence is MTETSLSSQCFPMSVLNNTIAEPLIFLLMGIPGLKATQY. Residue asparagine 17 is glycosylated (N-linked (GlcNAc...) asparagine). Residues 40-60 traverse the membrane as a helical segment; the sequence is WISIPFCLLYVVAVSGNSMIL. Residues 61-68 are Cytoplasmic-facing; the sequence is FVVLCERS. A helical membrane pass occupies residues 69–89; the sequence is LHKPMYYFLSMLSATDLSLSL. At 90–113 the chain is on the extracellular side; the sequence is CTLSTTLGVFWFEAREINLNACIA. Cysteine 111 and cysteine 203 form a disulfide bridge. A helical membrane pass occupies residues 114–134; it reads QMFFLHGFTFMESGVLLAMAF. Residues 135–153 are Cytoplasmic-facing; it reads DRFVAICYPLRYTTILTNA. A helical transmembrane segment spans residues 154 to 174; that stretch reads RIAKIGMSMLIRNVAVMLPVM. At 175-210 the chain is on the extracellular side; the sequence is LFVKRLSFCSSMVLSHSYCYHVDLIQLSCTDNRINS. The chain crosses the membrane as a helical span at residues 211–231; the sequence is ILGLFALLSTTGFDCPCILLS. Residues 232–251 lie on the Cytoplasmic side of the membrane; sequence YILIIRSVLSIASSEERRKA. The helical transmembrane segment at 252-272 threads the bilayer; that stretch reads FNTCTSHISAVSIFYLPLISL. Residues 273–287 are Extracellular-facing; the sequence is SLVHRYGHSAPPFVH. Residues 288 to 308 form a helical membrane-spanning segment; sequence IIMANVFLLIPPVLNPIIYSV. Topologically, residues 309-342 are cytoplasmic; sequence KIKQIQKAIIKVLIQKHSKSNHQLFLIRDKAIYE.

It belongs to the G-protein coupled receptor 1 family.

Its subcellular location is the cell membrane. In terms of biological role, odorant receptor. This chain is Olfactory receptor 51F2 (OR51F2), found in Homo sapiens (Human).